Here is a 366-residue protein sequence, read N- to C-terminus: Peptide chain release factor 2 (366 aa).

An N5-methylglutamine modification is found at Q251.

Belongs to the prokaryotic/mitochondrial release factor family. Post-translationally, methylated by PrmC. Methylation increases the termination efficiency of RF2.

The protein localises to the cytoplasm. Peptide chain release factor 2 directs the termination of translation in response to the peptide chain termination codons UGA and UAA. The polypeptide is Peptide chain release factor 2 (Campylobacter concisus (strain 13826)).